Consider the following 160-residue polypeptide: ATP synthase subunit b, chloroplastic (160 aa).

The helical transmembrane segment at 12–31 (NVINIAILVVILIRFARQVV) threads the bilayer.

This sequence belongs to the ATPase B chain family. F-type ATPases have 2 components, F(1) - the catalytic core - and F(0) - the membrane proton channel. F(1) has five subunits: alpha(3), beta(3), gamma(1), delta(1), epsilon(1). F(0) has four main subunits: a(1), b(1), b'(1) and c(10-14). The alpha and beta chains form an alternating ring which encloses part of the gamma chain. F(1) is attached to F(0) by a central stalk formed by the gamma and epsilon chains, while a peripheral stalk is formed by the delta, b and b' chains.

The protein resides in the plastid. It is found in the chloroplast thylakoid membrane. In terms of biological role, f(1)F(0) ATP synthase produces ATP from ADP in the presence of a proton or sodium gradient. F-type ATPases consist of two structural domains, F(1) containing the extramembraneous catalytic core and F(0) containing the membrane proton channel, linked together by a central stalk and a peripheral stalk. During catalysis, ATP synthesis in the catalytic domain of F(1) is coupled via a rotary mechanism of the central stalk subunits to proton translocation. Component of the F(0) channel, it forms part of the peripheral stalk, linking F(1) to F(0). The chain is ATP synthase subunit b, chloroplastic from Cyanidioschyzon merolae (strain NIES-3377 / 10D) (Unicellular red alga).